A 457-amino-acid polypeptide reads, in one-letter code: Probable xyloglucan 6-xylosyltransferase 3 (457 aa).

Residues 1-40 (MGKEDGFRTQKRVSTASSAAAGVLPTTMASGGVRRPPPRG) are disordered. The Cytoplasmic segment spans residues 1 to 51 (MGKEDGFRTQKRVSTASSAAAGVLPTTMASGGVRRPPPRGRQIQKTFNNVK). Residues 52–71 (MTILCGFVTILVLRGTIGIN) traverse the membrane as a helical; Signal-anchor for type II membrane protein segment. Residues 72 to 457 (FGTSDADVVN…TTPLKIEARS (386 aa)) are Lumenal-facing. 2 N-linked (GlcNAc...) asparagine glycosylation sites follow: N115 and N431.

The protein belongs to the glycosyltransferase 34 family.

It localises to the golgi apparatus membrane. The catalysed reaction is Transfers an alpha-D-xylosyl residue from UDP-D-xylose to a glucose residue in xyloglucan, forming an alpha-(1-&gt;6)-D-xylosyl-D-glucose linkage.. Its function is as follows. Probable xyloglucan xylosyltransferase involved in the biosynthesis of xyloglucan. The sequence is that of Probable xyloglucan 6-xylosyltransferase 3 from Arabidopsis thaliana (Mouse-ear cress).